Reading from the N-terminus, the 443-residue chain is Thymidine phosphorylase (443 aa).

It belongs to the thymidine/pyrimidine-nucleoside phosphorylase family. As to quaternary structure, homodimer.

The enzyme catalyses thymidine + phosphate = 2-deoxy-alpha-D-ribose 1-phosphate + thymine. Its pathway is pyrimidine metabolism; dTMP biosynthesis via salvage pathway; dTMP from thymine: step 1/2. In terms of biological role, the enzymes which catalyze the reversible phosphorolysis of pyrimidine nucleosides are involved in the degradation of these compounds and in their utilization as carbon and energy sources, or in the rescue of pyrimidine bases for nucleotide synthesis. The protein is Thymidine phosphorylase of Aeromonas salmonicida (strain A449).